A 789-amino-acid polypeptide reads, in one-letter code: Trimethylamine-oxide aldolase (789 aa).

This sequence in the C-terminal section; belongs to the GcvT family.

It carries out the reaction trimethylamine N-oxide + H(+) = dimethylamine + formaldehyde. Its function is as follows. Catalyzes the conversion of trimethylamine N-oxide (TMAO) to dimethylamine (DMA) and formaldehyde. The protein is Trimethylamine-oxide aldolase of Ruegeria pomeroyi (strain ATCC 700808 / DSM 15171 / DSS-3) (Silicibacter pomeroyi).